The following is a 1491-amino-acid chain: Terminal uridylyltransferase 7 (1491 aa).

Position 64 is a phosphothreonine (T64). Residues S132 and S172 each carry the phosphoserine modification. The tract at residues 165 to 203 (MSEMEAGSPENKKQRSRPRKPRRTRTEDSEQDGDLDGPV) is disordered. Over residues 178 to 187 (QRSRPRKPRR) the composition is skewed to basic residues. The segment at 244 to 274 (YTCKLCDALIDSIPFAHKHIKEKRHKKNLKE) adopts a Matrin-type zinc-finger fold. A PAP-associated 1 domain is found at 551–600 (VGQLWVELLRFYALEFNLADLVISIRVKELISRESKDWPKKRIAIEDPYS). Phosphoserine occurs at positions 600 and 747. Disordered regions lie at residues 740 to 774 (AELPETGSDNEEVRRKTKHPLSTDDQGLSSSKHPE) and 834 to 911 (QSRT…CGEN). Positions 844 to 857 (DDEEEEEEEEEEEE) are enriched in acidic residues. Position 865 is a phosphothreonine (T865). Acidic residues predominate over residues 885–897 (GEEDALSEEDDLA). S891 is subject to Phosphoserine. The tract at residues 947–1491 (RKLTFTKGKS…ASVKRTQQES (545 aa)) is sufficient for monouridylation activity. The CCHC-type 1 zinc finger occupies 959-976 (VVCSLCKREGHLKKDCPE). UTP-binding positions include 1043–1046 (SSKN), 1053–1056 (SDLD), N1126, K1148, 1166–1170 (SYAYT), and H1282. Mg(2+)-binding residues include D1054 and D1056. The region spanning 1230-1282 (VGQLWLGLLRFYTEEFDFKEHVISIRRKSLLTTFKKQWTSKYIVIEDPFDLNH) is the PAP-associated 2 domain. The segment at 1341–1358 (RCCRICGKIGHFMKDCPM) adopts a CCHC-type 2 zinc-finger fold. Disordered stretches follow at residues 1362–1399 (VRRRRDQEDTPNQRYSESKEKRSKEDKEIQNKYTEKEV) and 1463–1491 (PQFKGSPGSLSSKYMTQGRASVKRTQQES). The span at 1377–1399 (SESKEKRSKEDKEIQNKYTEKEV) shows a compositional bias: basic and acidic residues. The segment at 1447-1464 (KRCFICGREGHIKKECPQ) adopts a CCHC-type 3 zinc-finger fold. The segment covering 1470–1481 (GSLSSKYMTQGR) has biased composition (polar residues).

This sequence belongs to the DNA polymerase type-B-like family. The cofactor is Mg(2+). Mn(2+) serves as cofactor.

Its subcellular location is the cytoplasm. The enzyme catalyses RNA(n) + UTP = RNA(n)-3'-uridine ribonucleotide + diphosphate. Uridylyltransferase that mediates the terminal uridylation of mRNAs with short (less than 25 nucleotides) poly(A) tails, hence facilitating global mRNA decay. Essential for both oocyte maturation and fertility. Through 3' terminal uridylation of mRNA, sculpts, with TUT7, the maternal transcriptome by eliminating transcripts during oocyte growth. Involved in microRNA (miRNA)-induced gene silencing through uridylation of deadenylated miRNA targets. Also acts as a suppressor of miRNA biogenesis by mediating the terminal uridylation of miRNA precursors, including that of let-7 (pre-let-7). Uridylated pre-let-7 RNA is not processed by Dicer and undergo degradation. Pre-let-7 uridylation is strongly enhanced in the presence of LIN28A. Due to functional redundancy between ZCCHC6 and ZCCHC11, the identification of the specific role of each of these proteins is difficult. Involved in microRNA (miRNA)-induced gene silencing through uridylation of deadenylated miRNA targets. Also functions as an integral regulator of microRNA biogenesiS using 3 different uridylation mechanisms. Acts as a suppressor of miRNA biogenesis by mediating the terminal uridylation of some miRNA precursors, including that of let-7 (pre-let-7). Uridylated pre-let-7 RNA is not processed by Dicer and undergo degradation. Pre-let-7 oligouridylation is strongly enhanced in the presence of LIN28A. In the absence of LIN28A, TUT7 and TUT4 monouridylate group II pre-miRNAs, which includes most of pre-let7 members, that shapes an optimal 3' end overhang for efficient processing. Add oligo-U tails to truncated pre-miRNAS with a 5' overhang which may promote rapid degradation of non-functional pre-miRNA species. Does not play a role in replication-dependent histone mRNA degradation. Due to functional redundancy between TUT4 and TUT7, the identification of the specific role of each of these proteins is difficult. TUT4 and TUT7 restrict retrotransposition of long interspersed element-1 (LINE-1) in cooperation with MOV10 counteracting the RNA chaperonne activity of L1RE1. TUT7 uridylates LINE-1 mRNAs in the cytoplasm which inhibits initiation of reverse transcription once in the nucleus, whereas uridylation by TUT4 destabilizes mRNAs in cytoplasmic ribonucleoprotein granules. This Mus musculus (Mouse) protein is Terminal uridylyltransferase 7.